The following is a 271-amino-acid chain: Urease accessory protein UreD (271 aa).

Belongs to the UreD family. UreD, UreF and UreG form a complex that acts as a GTP-hydrolysis-dependent molecular chaperone, activating the urease apoprotein by helping to assemble the nickel containing metallocenter of UreC. The UreE protein probably delivers the nickel.

The protein resides in the cytoplasm. In terms of biological role, required for maturation of urease via the functional incorporation of the urease nickel metallocenter. This chain is Urease accessory protein UreD, found in Haemophilus influenzae (strain PittGG).